The primary structure comprises 2588 residues: uncharacterized protein (2588 aa).

The segment covering 1–11 (MSFKNNEKYMD) has biased composition (basic and acidic residues). 9 disordered regions span residues 1 to 56 (MSFK…NISN), 442 to 598 (ELES…HFSN), 774 to 801 (KKEKKKTKTDMDNNNNNNNNNNNDNNNI), 1303 to 1357 (DSHD…KKKY), 1631 to 1662 (QNSNNKSNDSLKMSYSKKKKQHTNEHMNHHQN), 1685 to 1705 (NNNNNNNNNNNNNDDNTKDQP), 1820 to 1856 (KLNVQTNDQGERQDERNIDHEDEPVSSNTEDDHEEND), 2317 to 2342 (KKKKELDDVEKEGQPKMGVGNDDNIN), and 2415 to 2437 (YDNNNNNDNNNDNNNDNNNNSHT). Positions 42 to 56 (NNNNNNNNNNSNISN) are enriched in low complexity. Residues 413 to 452 (YREIEENEKVMEMQRRENELLEEKKRLKQELESYHDDSST) adopt a coiled-coil conformation. The segment covering 451-462 (STDDDSSADEQQ) has biased composition (acidic residues). Basic and acidic residues-rich tracts occupy residues 463–515 (DERR…KNDD) and 522–588 (DHTH…DHTH). A compositionally biased stretch (low complexity) spans 785–801 (DNNNNNNNNNNNDNNNI). The span at 1308-1318 (NNDDSVNDSND) shows a compositional bias: acidic residues. The segment covering 1319-1331 (DTNNVNVNVNVND) has biased composition (low complexity). A compositionally biased stretch (basic residues) spans 1347 to 1356 (DKKKKHKKKK). The segment covering 1631-1643 (QNSNNKSNDSLKM) has biased composition (polar residues). The segment covering 1685–1698 (NNNNNNNNNNNNND) has biased composition (low complexity). Positions 1828-1838 (QGERQDERNID) are enriched in basic and acidic residues. Residues 1839 to 1856 (HEDEPVSSNTEDDHEEND) show a composition bias toward acidic residues. Low complexity predominate over residues 2416–2434 (DNNNNNDNNNDNNNDNNNN).

This is an uncharacterized protein from Plasmodium falciparum (isolate 3D7).